Reading from the N-terminus, the 66-residue chain is Large ribosomal subunit protein bL33c (66 aa).

Belongs to the bacterial ribosomal protein bL33 family.

The protein resides in the plastid. The protein localises to the chloroplast. This Solanum bulbocastanum (Wild potato) protein is Large ribosomal subunit protein bL33c.